The primary structure comprises 445 residues: Trigger factor (445 aa).

The region spanning 163-248 is the PPIase FKBP-type domain; it reads GDTVVIDYVG…IHEVKVKELP (86 aa). A disordered region spans residues 425–445; it reads KEVESAKDDADKEASDAKADK.

This sequence belongs to the FKBP-type PPIase family. Tig subfamily.

It is found in the cytoplasm. The enzyme catalyses [protein]-peptidylproline (omega=180) = [protein]-peptidylproline (omega=0). Functionally, involved in protein export. Acts as a chaperone by maintaining the newly synthesized protein in an open conformation. Functions as a peptidyl-prolyl cis-trans isomerase. The protein is Trigger factor of Lacticaseibacillus casei (strain BL23) (Lactobacillus casei).